The primary structure comprises 355 residues: Protein-glutamate methylesterase/protein-glutamine glutaminase 3 (355 aa).

The 119-residue stretch at 8–126 (RVLVVDDSPT…AEELRRWGKE (119 aa)) folds into the Response regulatory domain. Residue Asp-59 is modified to 4-aspartylphosphate. The CheB-type methylesterase domain occupies 152–337 (PPTGARVDIF…LASMPELILQ (186 aa)). Active-site residues include Ser-166, His-193, and Asp-284.

Belongs to the CheB family. In terms of processing, phosphorylated by CheA. Phosphorylation of the N-terminal regulatory domain activates the methylesterase activity.

It localises to the cytoplasm. It catalyses the reaction [protein]-L-glutamate 5-O-methyl ester + H2O = L-glutamyl-[protein] + methanol + H(+). The enzyme catalyses L-glutaminyl-[protein] + H2O = L-glutamyl-[protein] + NH4(+). Functionally, involved in chemotaxis. Part of a chemotaxis signal transduction system that modulates chemotaxis in response to various stimuli. Catalyzes the demethylation of specific methylglutamate residues introduced into the chemoreceptors (methyl-accepting chemotaxis proteins or MCP) by CheR. Also mediates the irreversible deamidation of specific glutamine residues to glutamic acid. The protein is Protein-glutamate methylesterase/protein-glutamine glutaminase 3 of Myxococcus xanthus (strain DK1622).